A 181-amino-acid chain; its full sequence is MTVEIANIVGSGDLGVELDVEPLEADLSTPYSEYDPSNYHGLYVRLEENGPLITVYRSGKYIITGCASMESLHETNEEFLGMLADLGVTEEDTQTGFTVENVVCTAMLDELVSLNALAIGLGLEVTEYEPEQFPGLVYRPEEIGAVLLVFANGKMVITGAKDTETAESAYEYFQSKVQELV.

A run of 2 repeats spans residues 5–83 (IANI…LGML) and 99–177 (VENV…QSKV).

It belongs to the TBP family.

Functionally, general factor that plays a role in the activation of archaeal genes transcribed by RNA polymerase. Binds specifically to the TATA box promoter element which lies close to the position of transcription initiation. This chain is TATA-box-binding protein C (tbpC1), found in Halobacterium salinarum (strain ATCC 700922 / JCM 11081 / NRC-1) (Halobacterium halobium).